Here is a 222-residue protein sequence, read N- to C-terminus: Nudix hydrolase 11 (222 aa).

The 145-residue stretch at 31–175 folds into the Nudix hydrolase domain; it reads AKSSAVLVCL…EGERYLLQYF (145 aa). A Nudix box motif is present at residues 73-96; that stretch reads GGKRDQEDKDDIATALREAREEIG. Glu90 and Glu94 together coordinate Mg(2+). The helical transmembrane segment at 186–204 threads the bilayer; the sequence is FIIWALTAGILIRVASIVY.

It belongs to the Nudix hydrolase family. PCD1 subfamily. The cofactor is Mn(2+). Requires Mg(2+) as cofactor. In terms of tissue distribution, expressed in roots, stems and leaves.

The protein localises to the peroxisome membrane. In terms of biological role, coenzyme A diphosphatase which mediates the cleavage of CoA into 3',5'-ADP from CoA and 4'-phosphopantetheine. Can use malonyl-CoA, hexanoyl-CoA, lauroyl-CoA, myristoyl-CoA and palmitoyl-CoA as substrates, but not isobutyryl-CoA or propionyl-CoA. The sequence is that of Nudix hydrolase 11 (NUDT11) from Arabidopsis thaliana (Mouse-ear cress).